A 506-amino-acid polypeptide reads, in one-letter code: Ecdysteroid UDP-glucosyltransferase (506 aa).

The N-terminal stretch at 1-18 (MTILCWLALLSTLTAVNA) is a signal peptide.

It belongs to the UDP-glycosyltransferase family. Glycosylated.

In terms of biological role, catalyzes the transfer of glucose from UDP-glucose to ecdysteroids which are insect molting hormones. Acts on the host at the organismal level to block its development, thereby increasing the yield of progeny virus. The chain is Ecdysteroid UDP-glucosyltransferase (EGT) from Lepidoptera (butterflies and moths).